Reading from the N-terminus, the 63-residue chain is Large ribosomal subunit protein bL28 (63 aa).

It belongs to the bacterial ribosomal protein bL28 family.

This chain is Large ribosomal subunit protein bL28, found in Desulfatibacillum aliphaticivorans.